The chain runs to 82 residues: Small ribosomal subunit protein bS16 (82 aa).

It belongs to the bacterial ribosomal protein bS16 family.

This is Small ribosomal subunit protein bS16 from Blochmanniella floridana.